The primary structure comprises 546 residues: Chaperonin GroEL 2 (546 aa).

Residues 30-33 (TLGP), K51, 87-91 (DGTTT), G415, and D495 contribute to the ATP site. Residues 527 to 546 (DAAPATAPGGPGAGGPGFDF) are disordered. The span at 535 to 546 (GGPGAGGPGFDF) shows a compositional bias: gly residues.

This sequence belongs to the chaperonin (HSP60) family. In terms of assembly, forms a cylinder of 14 subunits composed of two heptameric rings stacked back-to-back. Interacts with the co-chaperonin GroES.

It localises to the cytoplasm. It carries out the reaction ATP + H2O + a folded polypeptide = ADP + phosphate + an unfolded polypeptide.. In terms of biological role, together with its co-chaperonin GroES, plays an essential role in assisting protein folding. The GroEL-GroES system forms a nano-cage that allows encapsulation of the non-native substrate proteins and provides a physical environment optimized to promote and accelerate protein folding. This chain is Chaperonin GroEL 2, found in Burkholderia ambifaria (strain ATCC BAA-244 / DSM 16087 / CCUG 44356 / LMG 19182 / AMMD) (Burkholderia cepacia (strain AMMD)).